The sequence spans 173 residues: NADH-ubiquinone oxidoreductase chain 6 (173 aa).

The next 5 membrane-spanning stretches (helical) occupy residues 1 to 21 (MTYFVLFLGLCFVLGGLAVAS), 27 to 47 (YGVVGLVLASVAGCGWLLSLG), 48 to 68 (VSFVSLVLFMVYLGGMLVVFV), 87 to 107 (VVGYGVGFVMVLMVGMVVGGF), and 139 to 159 (CGVGMFLVAGWGLLLTLFVVL).

The protein belongs to the complex I subunit 6 family.

It is found in the mitochondrion membrane. It catalyses the reaction a ubiquinone + NADH + 5 H(+)(in) = a ubiquinol + NAD(+) + 4 H(+)(out). Its function is as follows. Core subunit of the mitochondrial membrane respiratory chain NADH dehydrogenase (Complex I) that is believed to belong to the minimal assembly required for catalysis. Complex I functions in the transfer of electrons from NADH to the respiratory chain. The immediate electron acceptor for the enzyme is believed to be ubiquinone. This chain is NADH-ubiquinone oxidoreductase chain 6 (MT-ND6), found in Aethia pusilla (Least auklet).